The chain runs to 441 residues: Thymidine phosphorylase (441 aa).

It belongs to the thymidine/pyrimidine-nucleoside phosphorylase family. As to quaternary structure, homodimer.

The catalysed reaction is thymidine + phosphate = 2-deoxy-alpha-D-ribose 1-phosphate + thymine. Its pathway is pyrimidine metabolism; dTMP biosynthesis via salvage pathway; dTMP from thymine: step 1/2. Functionally, the enzymes which catalyze the reversible phosphorolysis of pyrimidine nucleosides are involved in the degradation of these compounds and in their utilization as carbon and energy sources, or in the rescue of pyrimidine bases for nucleotide synthesis. The chain is Thymidine phosphorylase from Chromobacterium violaceum (strain ATCC 12472 / DSM 30191 / JCM 1249 / CCUG 213 / NBRC 12614 / NCIMB 9131 / NCTC 9757 / MK).